The primary structure comprises 645 residues: 1,4-alpha-glucan branching enzyme GlgB (645 aa).

The Nucleophile role is filled by Asp-309. The active-site Proton donor is the Glu-352. Residues Val-619–Arg-645 form a disordered region. Polar residues predominate over residues Arg-636–Arg-645.

Belongs to the glycosyl hydrolase 13 family. GlgB subfamily. In terms of assembly, monomer.

It carries out the reaction Transfers a segment of a (1-&gt;4)-alpha-D-glucan chain to a primary hydroxy group in a similar glucan chain.. Its pathway is glycan biosynthesis; glycogen biosynthesis. Functionally, catalyzes the formation of the alpha-1,6-glucosidic linkages in glycogen by scission of a 1,4-alpha-linked oligosaccharide from growing alpha-1,4-glucan chains and the subsequent attachment of the oligosaccharide to the alpha-1,6 position. The protein is 1,4-alpha-glucan branching enzyme GlgB of Bacillus cereus (strain Q1).